A 431-amino-acid chain; its full sequence is Probable ganciclovir kinase (431 aa).

The region spanning Pro79–Gly368 is the Protein kinase domain. Residues Leu85 to Val93 and Lys103 contribute to the ATP site. Catalysis depends on Asp195, which acts as the Proton acceptor.

The protein belongs to the protein kinase superfamily. Tyr protein kinase family. HCMV ganciclovir subfamily.

In terms of biological role, phosphorylates the antiviral nucleoside analog ganciclovir. In Saimiriine herpesvirus 2 (strain 11) (SaHV-2), this protein is Probable ganciclovir kinase (36).